Reading from the N-terminus, the 499-residue chain is Glycerol kinase (499 aa).

An ADP-binding site is contributed by Thr-13. 3 residues coordinate ATP: Thr-13, Thr-14, and Ser-15. Residue Thr-13 coordinates sn-glycerol 3-phosphate. Residue Arg-17 participates in ADP binding. Residues Arg-83, Glu-84, Tyr-135, and Asp-245 each coordinate sn-glycerol 3-phosphate. Residues Arg-83, Glu-84, Tyr-135, Asp-245, and Gln-246 each coordinate glycerol. Positions 267 and 310 each coordinate ADP. 4 residues coordinate ATP: Thr-267, Gly-310, Gln-314, and Ala-411. Residues Ala-411 and Asn-415 each coordinate ADP.

It belongs to the FGGY kinase family.

It carries out the reaction glycerol + ATP = sn-glycerol 3-phosphate + ADP + H(+). Its pathway is polyol metabolism; glycerol degradation via glycerol kinase pathway; sn-glycerol 3-phosphate from glycerol: step 1/1. With respect to regulation, inhibited by fructose 1,6-bisphosphate (FBP). Its function is as follows. Key enzyme in the regulation of glycerol uptake and metabolism. Catalyzes the phosphorylation of glycerol to yield sn-glycerol 3-phosphate. This is Glycerol kinase from Xylella fastidiosa (strain M12).